Reading from the N-terminus, the 200-residue chain is Large ribosomal subunit protein uL4 (200 aa).

The segment at Gly-38–Ile-72 is disordered.

This sequence belongs to the universal ribosomal protein uL4 family. As to quaternary structure, part of the 50S ribosomal subunit.

One of the primary rRNA binding proteins, this protein initially binds near the 5'-end of the 23S rRNA. It is important during the early stages of 50S assembly. It makes multiple contacts with different domains of the 23S rRNA in the assembled 50S subunit and ribosome. Its function is as follows. Forms part of the polypeptide exit tunnel. In Pseudomonas fluorescens (strain ATCC BAA-477 / NRRL B-23932 / Pf-5), this protein is Large ribosomal subunit protein uL4.